The chain runs to 425 residues: Ribosomal protein uS12 methylthiotransferase RimO (425 aa).

Residues 2 to 115 enclose the MTTase N-terminal domain; it reads KNFTVITLGC…IIDYIKQFSK (114 aa). [4Fe-4S] cluster-binding residues include C11, C47, C78, C142, C146, and C149. Positions 128-357 constitute a Radical SAM core domain; sequence VEPPSYRYIK…MARQAVISLE (230 aa). The TRAM domain maps to 360-425; it reads RALIGKKYEA…YEYDVKGVIV (66 aa).

Belongs to the methylthiotransferase family. RimO subfamily. [4Fe-4S] cluster serves as cofactor.

The protein resides in the cytoplasm. It carries out the reaction L-aspartate(89)-[ribosomal protein uS12]-hydrogen + (sulfur carrier)-SH + AH2 + 2 S-adenosyl-L-methionine = 3-methylsulfanyl-L-aspartate(89)-[ribosomal protein uS12]-hydrogen + (sulfur carrier)-H + 5'-deoxyadenosine + L-methionine + A + S-adenosyl-L-homocysteine + 2 H(+). Its function is as follows. Catalyzes the methylthiolation of an aspartic acid residue of ribosomal protein uS12. The polypeptide is Ribosomal protein uS12 methylthiotransferase RimO (Thermodesulfovibrio yellowstonii (strain ATCC 51303 / DSM 11347 / YP87)).